A 444-amino-acid polypeptide reads, in one-letter code: Aflatoxin biosynthesis regulatory protein (444 aa).

A disordered region spans residues 1–26 (MVDHISPRASPGPIRSSQTRRARKLR). A DNA-binding region (zn(2)-C6 fungal-type) is located at residues 29-56 (CTSCASSKVRCTKEKPACARCIERGLAC). Positions 64–167 (MGRNPRAPSP…QGLGGDLAGQ (104 aa)) are disordered. Positions 106–116 (TQAHTHAHSHP) are enriched in basic residues. Residues 120–130 (PQSHPQSNQPP) show a composition bias toward low complexity. Residues 136-149 (PNGSSSVSAIFSHQ) show a composition bias toward polar residues.

The protein localises to the nucleus. It functions in the pathway mycotoxin biosynthesis; aflatoxin biosynthesis. Its function is as follows. Involved in the regulation of aflatoxin biosynthesis. May have a role in nitrate assimilation and sclerotial morphogenesis. This chain is Aflatoxin biosynthesis regulatory protein (aflR), found in Aspergillus parasiticus.